We begin with the raw amino-acid sequence, 471 residues long: Glutamine synthetase (471 aa).

In terms of domain architecture, GS beta-grasp spans 14–99 (QKIQMIDLKF…ICSIKEPRTG (86 aa)). The 366-residue stretch at 106-471 (PRVIAQKAID…PYEFYLYYDC (366 aa)) folds into the GS catalytic domain. Positions 131 and 133 each coordinate Mg(2+). Residue Glu208 coordinates ATP. The Mg(2+) site is built by Glu213 and Glu221. L-glutamate is bound by residues 265–266 (NG) and Gly266. His270 lines the Mg(2+) pocket. ATP is bound by residues 272–274 (HQS) and Ser274. The L-glutamate site is built by Arg322, Glu328, and Arg340. The ATP site is built by Arg340, Arg345, and Lys354. A Mg(2+)-binding site is contributed by Glu359. An L-glutamate-binding site is contributed by Arg361. O-AMP-tyrosine is present on Tyr399.

The protein belongs to the glutamine synthetase family. In terms of assembly, oligomer of 12 subunits arranged in the form of two hexagons. The cofactor is Mg(2+).

The protein localises to the cytoplasm. The enzyme catalyses L-glutamate + NH4(+) + ATP = L-glutamine + ADP + phosphate + H(+). The activity of this enzyme could be controlled by adenylation under conditions of abundant glutamine. Its function is as follows. Involved in nitrogen metabolism via ammonium assimilation. Catalyzes the ATP-dependent biosynthesis of glutamine from glutamate and ammonia. This chain is Glutamine synthetase, found in Microchaete diplosiphon (Fremyella diplosiphon).